Reading from the N-terminus, the 244-residue chain is Na(+)-translocating NADH-quinone reductase subunit E (244 aa).

Transmembrane regions (helical) follow at residues 11–31 (LLGI…TFLG), 50–70 (MSVA…HYFI), 90–110 (FLEL…LELL), 123–143 (GIFL…LFGI), 153–173 (VVFS…FATI), and 191–211 (ISFI…GIDI).

Belongs to the NqrDE/RnfAE family. As to quaternary structure, composed of six subunits; NqrA, NqrB, NqrC, NqrD, NqrE and NqrF.

Its subcellular location is the cell inner membrane. It carries out the reaction a ubiquinone + n Na(+)(in) + NADH + H(+) = a ubiquinol + n Na(+)(out) + NAD(+). Its function is as follows. NQR complex catalyzes the reduction of ubiquinone-1 to ubiquinol by two successive reactions, coupled with the transport of Na(+) ions from the cytoplasm to the periplasm. NqrA to NqrE are probably involved in the second step, the conversion of ubisemiquinone to ubiquinol. In Chlamydia trachomatis serovar L2 (strain ATCC VR-902B / DSM 19102 / 434/Bu), this protein is Na(+)-translocating NADH-quinone reductase subunit E.